The sequence spans 5061 residues: E3 ubiquitin-protein ligase rnf213-beta (5061 aa).

Positions 1-12 (MTRKRKSGKKGK) are enriched in basic residues. Positions 1-334 (MTRKRKSGKK…QRKPSPVRAP (334 aa)) are disordered. Composition is skewed to polar residues over residues 24-52 (GGST…TQKD) and 75-87 (SDGS…TNKE). The span at 100–110 (LQKKGPQKRKG) shows a compositional bias: basic residues. 2 stretches are compositionally biased toward polar residues: residues 127-163 (QTSY…TSAS) and 172-200 (TETV…QPPQ). Composition is skewed to basic and acidic residues over residues 217–229 (KGSE…EESV) and 236–289 (LSEI…EEPK). The segment covering 292 to 301 (AAAAATGKTG) has biased composition (low complexity). The span at 306-322 (EQTNQIEANQDSTMESK) shows a compositional bias: polar residues. Residues 1923–1928 (AVGKSL), E2023, D2074, K2417, and S2492 each bind ATP. Residues C3957, C3960, C3972, H3974, C3977, C3980, C3993, C3996, C4451, and H4455 each contribute to the Zn(2+) site. The segment at 3957-3997 (CRVCLMELSEPFALPCEHVFCRSCLRRSMEREEAQHCPVCR) adopts an RING-type zinc-finger fold. Residues 4429-4501 (MPDDHTSEAK…AYGDYDRTRP (73 aa)) form an RZ-type zinc finger. The active-site Nucleophile; for E3 ubiquitin-lipopolysaccharide ligase activity is the C4462. Residues C4471 and C4474 each contribute to the Zn(2+) site.

The protein belongs to the AAA ATPase family.

The protein resides in the cytoplasm. Its subcellular location is the cytosol. The protein localises to the lipid droplet. It carries out the reaction S-ubiquitinyl-[E2 ubiquitin-conjugating enzyme]-L-cysteine + [acceptor protein]-L-lysine = [E2 ubiquitin-conjugating enzyme]-L-cysteine + N(6)-ubiquitinyl-[acceptor protein]-L-lysine.. The catalysed reaction is ATP + H2O = ADP + phosphate + H(+). The protein operates within protein modification; protein ubiquitination. In terms of biological role, atypical E3 ubiquitin ligase that can catalyze ubiquitination of both proteins and lipids, and which is involved in various processes, such as lipid metabolism, angiogenesis and cell-autonomous immunity. Acts as a key immune sensor by catalyzing ubiquitination of the lipid A moiety of bacterial lipopolysaccharide (LPS) via its RZ-type zinc-finger: restricts the proliferation of cytosolic bacteria, such as Salmonella, by generating the bacterial ubiquitin coat through the ubiquitination of LPS. Ubiquitination of LPS triggers cell-autonomous immunity, such as antibacterial autophagy, leading to degradation of the microbial invader. Involved in lipid metabolism by regulating fat storage and lipid droplet formation; act by inhibiting the lipolytic process. Also regulates lipotoxicity by inhibiting desaturation of fatty acids. Also acts as an E3 ubiquitin-protein ligase via its RING-type zinc finger. Involved in the non-canonical Wnt signaling pathway in vascular development: acts by mediating ubiquitination and degradation of proteins downstream of rspo3, leading to inhibit the non-canonical Wnt signaling pathway and promoting vessel regression. Also has ATPase activity; ATPase activity is required for ubiquitination of LPS. The chain is E3 ubiquitin-protein ligase rnf213-beta (rnf213b) from Danio rerio (Zebrafish).